A 95-amino-acid polypeptide reads, in one-letter code: Co-chaperonin GroES (95 aa).

The protein belongs to the GroES chaperonin family. As to quaternary structure, heptamer of 7 subunits arranged in a ring. Interacts with the chaperonin GroEL.

It localises to the cytoplasm. Its function is as follows. Together with the chaperonin GroEL, plays an essential role in assisting protein folding. The GroEL-GroES system forms a nano-cage that allows encapsulation of the non-native substrate proteins and provides a physical environment optimized to promote and accelerate protein folding. GroES binds to the apical surface of the GroEL ring, thereby capping the opening of the GroEL channel. In Francisella tularensis subsp. tularensis (strain FSC 198), this protein is Co-chaperonin GroES.